A 175-amino-acid polypeptide reads, in one-letter code: Translation initiation factor IF-3 (175 aa).

Belongs to the IF-3 family. As to quaternary structure, monomer.

It is found in the cytoplasm. In terms of biological role, IF-3 binds to the 30S ribosomal subunit and shifts the equilibrium between 70S ribosomes and their 50S and 30S subunits in favor of the free subunits, thus enhancing the availability of 30S subunits on which protein synthesis initiation begins. The sequence is that of Translation initiation factor IF-3 from Staphylococcus aureus (strain NCTC 8325 / PS 47).